The sequence spans 202 residues: Na(+)-translocating NADH-quinone reductase subunit E (202 aa).

Helical transmembrane passes span 5 to 25 (VSLF…FLGM), 35 to 55 (VSTA…TVPL), 81 to 101 (FLGL…LEMF), 114 to 134 (GVFL…LFMV), 144 to 164 (VVYG…LAGI), and 180 to 200 (LGIT…FGGM).

The protein belongs to the NqrDE/RnfAE family. In terms of assembly, composed of six subunits; NqrA, NqrB, NqrC, NqrD, NqrE and NqrF.

The protein localises to the cell inner membrane. It carries out the reaction a ubiquinone + n Na(+)(in) + NADH + H(+) = a ubiquinol + n Na(+)(out) + NAD(+). In terms of biological role, NQR complex catalyzes the reduction of ubiquinone-1 to ubiquinol by two successive reactions, coupled with the transport of Na(+) ions from the cytoplasm to the periplasm. NqrA to NqrE are probably involved in the second step, the conversion of ubisemiquinone to ubiquinol. The polypeptide is Na(+)-translocating NADH-quinone reductase subunit E (Psychrobacter arcticus (strain DSM 17307 / VKM B-2377 / 273-4)).